The primary structure comprises 166 residues: S-phase kinase-associated protein 1 homolog (166 aa).

Residues 105-166 form an interaction with the F-box domain of F-box proteins region; the sequence is ILAANYLDIK…ENKWAEEATS (62 aa).

It belongs to the SKP1 family. In terms of assembly, component of multiple SCF (SKP1-CUL1-F-box) E3 ubiquitin-protein ligase complexes formed of CUL1, SKP1, RBX1 and a variable F-box domain-containing protein as substrate-specific subunit.

It participates in protein modification; protein ubiquitination. In terms of biological role, essential component of the SCF (SKP1-CUL1-F-box protein) ubiquitin ligase complex, which mediates the ubiquitination of proteins involved in cell cycle progression, signal transduction and transcription. In the SCF complex, serves as an adapter that links the F-box protein to CUL1. The functional specificity of the SCF complex depends on the F-box protein as substrate recognition component. Its association with the holoenzyme telomerase ribonucleoprotein complex suggests that it may play a role in turnover of holoenzyme telomerase complex components. The protein is S-phase kinase-associated protein 1 homolog of Tetrahymena thermophila (strain SB210).